The following is a 196-amino-acid chain: Ribonuclease HII (196 aa).

Positions 9 to 196 constitute an RNase H type-2 domain; the sequence is RLVAGVDEVG…KPVRRALGIE (188 aa). The a divalent metal cation site is built by D15, E16, and D107.

The protein belongs to the RNase HII family. Requires Mn(2+) as cofactor. It depends on Mg(2+) as a cofactor.

The protein localises to the cytoplasm. The catalysed reaction is Endonucleolytic cleavage to 5'-phosphomonoester.. In terms of biological role, endonuclease that specifically degrades the RNA of RNA-DNA hybrids. The polypeptide is Ribonuclease HII (Aeromonas hydrophila subsp. hydrophila (strain ATCC 7966 / DSM 30187 / BCRC 13018 / CCUG 14551 / JCM 1027 / KCTC 2358 / NCIMB 9240 / NCTC 8049)).